A 206-amino-acid polypeptide reads, in one-letter code: NADH-quinone oxidoreductase subunit C (206 aa).

It belongs to the complex I 30 kDa subunit family. As to quaternary structure, NDH-1 is composed of 14 different subunits. Subunits NuoB, C, D, E, F, and G constitute the peripheral sector of the complex.

The protein resides in the cell inner membrane. It carries out the reaction a quinone + NADH + 5 H(+)(in) = a quinol + NAD(+) + 4 H(+)(out). In terms of biological role, NDH-1 shuttles electrons from NADH, via FMN and iron-sulfur (Fe-S) centers, to quinones in the respiratory chain. The immediate electron acceptor for the enzyme in this species is believed to be ubiquinone. Couples the redox reaction to proton translocation (for every two electrons transferred, four hydrogen ions are translocated across the cytoplasmic membrane), and thus conserves the redox energy in a proton gradient. The protein is NADH-quinone oxidoreductase subunit C of Nitrosomonas europaea (strain ATCC 19718 / CIP 103999 / KCTC 2705 / NBRC 14298).